The primary structure comprises 168 residues: Endoribonuclease YbeY (168 aa).

Residues His-122, His-126, and His-132 each coordinate Zn(2+).

It belongs to the endoribonuclease YbeY family. Zn(2+) serves as cofactor.

It localises to the cytoplasm. Functionally, single strand-specific metallo-endoribonuclease involved in late-stage 70S ribosome quality control and in maturation of the 3' terminus of the 16S rRNA. The polypeptide is Endoribonuclease YbeY (Brucella abortus (strain 2308)).